The following is a 299-amino-acid chain: N-acetylmuramic acid 6-phosphate etherase (299 aa).

In terms of domain architecture, SIS spans cysteine 55 to lysine 218. Catalysis depends on glutamate 83, which acts as the Proton donor. Residue glutamate 114 is part of the active site.

It belongs to the GCKR-like family. MurNAc-6-P etherase subfamily. Homodimer.

The enzyme catalyses N-acetyl-D-muramate 6-phosphate + H2O = N-acetyl-D-glucosamine 6-phosphate + (R)-lactate. It functions in the pathway amino-sugar metabolism; N-acetylmuramate degradation. Its function is as follows. Specifically catalyzes the cleavage of the D-lactyl ether substituent of MurNAc 6-phosphate, producing GlcNAc 6-phosphate and D-lactate. The protein is N-acetylmuramic acid 6-phosphate etherase of Pseudothermotoga lettingae (strain ATCC BAA-301 / DSM 14385 / NBRC 107922 / TMO) (Thermotoga lettingae).